The sequence spans 360 residues: Peptide chain release factor 1 (360 aa).

Q235 carries the N5-methylglutamine modification. The span at 291-308 (ASERRNLLGTGDRSDRNR) shows a compositional bias: basic and acidic residues. Residues 291-312 (ASERRNLLGTGDRSDRNRTYNF) form a disordered region.

This sequence belongs to the prokaryotic/mitochondrial release factor family. Post-translationally, methylated by PrmC. Methylation increases the termination efficiency of RF1.

The protein resides in the cytoplasm. Functionally, peptide chain release factor 1 directs the termination of translation in response to the peptide chain termination codons UAG and UAA. In Yersinia pseudotuberculosis serotype O:1b (strain IP 31758), this protein is Peptide chain release factor 1.